The primary structure comprises 1395 residues: DNA-directed RNA polymerase subunit beta' (1395 aa).

4 residues coordinate Zn(2+): Cys70, Cys72, Cys85, and Cys88. 3 residues coordinate Mg(2+): Asp470, Asp472, and Asp474. Positions 815, 889, 896, and 899 each coordinate Zn(2+).

The protein belongs to the RNA polymerase beta' chain family. The RNAP catalytic core consists of 2 alpha, 1 beta, 1 beta' and 1 omega subunit. When a sigma factor is associated with the core the holoenzyme is formed, which can initiate transcription. It depends on Mg(2+) as a cofactor. Zn(2+) serves as cofactor.

The catalysed reaction is RNA(n) + a ribonucleoside 5'-triphosphate = RNA(n+1) + diphosphate. DNA-dependent RNA polymerase catalyzes the transcription of DNA into RNA using the four ribonucleoside triphosphates as substrates. The sequence is that of DNA-directed RNA polymerase subunit beta' from Anaeromyxobacter sp. (strain Fw109-5).